The sequence spans 350 residues: Methylthioribose-1-phosphate isomerase (350 aa).

Substrate contacts are provided by residues 47–49, Arg89, and Gln196; that span reads RGA. Asp237 acts as the Proton donor in catalysis. 247 to 248 is a binding site for substrate; it reads NK.

It belongs to the eIF-2B alpha/beta/delta subunits family. MtnA subfamily.

It carries out the reaction 5-(methylsulfanyl)-alpha-D-ribose 1-phosphate = 5-(methylsulfanyl)-D-ribulose 1-phosphate. The protein operates within amino-acid biosynthesis; L-methionine biosynthesis via salvage pathway; L-methionine from S-methyl-5-thio-alpha-D-ribose 1-phosphate: step 1/6. In terms of biological role, catalyzes the interconversion of methylthioribose-1-phosphate (MTR-1-P) into methylthioribulose-1-phosphate (MTRu-1-P). This Nitratidesulfovibrio vulgaris (strain DSM 19637 / Miyazaki F) (Desulfovibrio vulgaris) protein is Methylthioribose-1-phosphate isomerase.